Consider the following 372-residue polypeptide: Alanine dehydrogenase (372 aa).

Arginine 15 and lysine 75 together coordinate substrate. The active-site Proton donor/acceptor is histidine 96. NAD(+) is bound by residues serine 134, isoleucine 178–alanine 179, aspartate 198, serine 220, valine 239–leucine 240, isoleucine 267–aspartate 270, arginine 280, and valine 299–methionine 302. Aspartate 270 functions as the Proton donor/acceptor in the catalytic mechanism.

Belongs to the AlaDH/PNT family. In terms of assembly, homohexamer.

It is found in the cytoplasm. The catalysed reaction is L-alanine + NAD(+) + H2O = pyruvate + NH4(+) + NADH + H(+). It functions in the pathway amino-acid degradation; L-alanine degradation via dehydrogenase pathway; NH(3) and pyruvate from L-alanine: step 1/1. Its activity is regulated as follows. Inhibited by p-chloromercuribenzoate and HgCl(2) and by Cu(2+) and Pb(2+) salts, unaffected by amino acids such as D-alanine and beta-alanine or by nucleotides or nucleosides. Its function is as follows. Catalyzes the reversible reductive amination of pyruvate to L-alanine. Prefers L-alanine for oxidative deamination, other substrates are poorly reactive. In the other direction 2-oxobutyrate is almost as reactive as pyruvate. Ammonia is the sole amino donor for the reductive amination of pyruvate, NADPH is inert. Reductive amination proceeds through a sequential, ordered ternary-binary mechanism, where NADH binds first followed by ammonia and pyruvate; the products are released in the order L-alanine and NAD(+). A key factor in the assimilation of L-alanine as an energy source via the tricarboxylic acid cycle during sporulation. The polypeptide is Alanine dehydrogenase (ald) (Lysinibacillus sphaericus (Bacillus sphaericus)).